The following is a 73-amino-acid chain: Large ribosomal subunit protein bL31 (73 aa).

Residues Cys16, Cys18, Cys38, and Cys41 each contribute to the Zn(2+) site.

Belongs to the bacterial ribosomal protein bL31 family. Type A subfamily. As to quaternary structure, part of the 50S ribosomal subunit. The cofactor is Zn(2+).

In terms of biological role, binds the 23S rRNA. This chain is Large ribosomal subunit protein bL31, found in Streptomyces avermitilis (strain ATCC 31267 / DSM 46492 / JCM 5070 / NBRC 14893 / NCIMB 12804 / NRRL 8165 / MA-4680).